The following is a 499-amino-acid chain: Probable cytosol aminopeptidase (499 aa).

Residues K268 and D273 each coordinate Mn(2+). K280 is an active-site residue. Mn(2+) contacts are provided by D291, D350, and E352. R354 is a catalytic residue.

Belongs to the peptidase M17 family. It depends on Mn(2+) as a cofactor.

Its subcellular location is the cytoplasm. The enzyme catalyses Release of an N-terminal amino acid, Xaa-|-Yaa-, in which Xaa is preferably Leu, but may be other amino acids including Pro although not Arg or Lys, and Yaa may be Pro. Amino acid amides and methyl esters are also readily hydrolyzed, but rates on arylamides are exceedingly low.. It carries out the reaction Release of an N-terminal amino acid, preferentially leucine, but not glutamic or aspartic acids.. Functionally, presumably involved in the processing and regular turnover of intracellular proteins. Catalyzes the removal of unsubstituted N-terminal amino acids from various peptides. The polypeptide is Probable cytosol aminopeptidase (Halorhodospira halophila (strain DSM 244 / SL1) (Ectothiorhodospira halophila (strain DSM 244 / SL1))).